The chain runs to 326 residues: Apoptosis facilitator Bcl-2-like protein 14 (326 aa).

S44 is modified (phosphoserine). The disordered stretch occupies residues T99 to Q127. Positions I211–E225 match the BH3 motif. The BH2 motif lies at W307–W314.

Belongs to the Bcl-2 family. In terms of processing, phosphorylated by MELK, leading to inhibit its pro-apoptotic function.

It localises to the cytoplasm. Functionally, plays a role in apoptosis. This is Apoptosis facilitator Bcl-2-like protein 14 (Bcl2l14) from Rattus norvegicus (Rat).